A 357-amino-acid chain; its full sequence is Dual-specificity RNA methyltransferase RlmN (357 aa).

Catalysis depends on glutamate 89, which acts as the Proton acceptor. Residues 109-340 (EGEKYTVCVS…CTIRESKALD (232 aa)) enclose the Radical SAM core domain. A disulfide bridge connects residues cysteine 116 and cysteine 345. [4Fe-4S] cluster-binding residues include cysteine 123, cysteine 127, and cysteine 130. Residues 173-174 (GE), serine 203, 226-228 (SLH), and asparagine 302 contribute to the S-adenosyl-L-methionine site. Cysteine 345 functions as the S-methylcysteine intermediate in the catalytic mechanism.

This sequence belongs to the radical SAM superfamily. RlmN family. [4Fe-4S] cluster is required as a cofactor.

It localises to the cytoplasm. It carries out the reaction adenosine(2503) in 23S rRNA + 2 reduced [2Fe-2S]-[ferredoxin] + 2 S-adenosyl-L-methionine = 2-methyladenosine(2503) in 23S rRNA + 5'-deoxyadenosine + L-methionine + 2 oxidized [2Fe-2S]-[ferredoxin] + S-adenosyl-L-homocysteine. It catalyses the reaction adenosine(37) in tRNA + 2 reduced [2Fe-2S]-[ferredoxin] + 2 S-adenosyl-L-methionine = 2-methyladenosine(37) in tRNA + 5'-deoxyadenosine + L-methionine + 2 oxidized [2Fe-2S]-[ferredoxin] + S-adenosyl-L-homocysteine. Functionally, specifically methylates position 2 of adenine 2503 in 23S rRNA and position 2 of adenine 37 in tRNAs. m2A2503 modification seems to play a crucial role in the proofreading step occurring at the peptidyl transferase center and thus would serve to optimize ribosomal fidelity. The polypeptide is Dual-specificity RNA methyltransferase RlmN (Helicobacter pylori (strain G27)).